Consider the following 301-residue polypeptide: Ribosomal RNA small subunit methyltransferase A (301 aa).

Positions 23, 25, 50, 72, 97, and 149 each coordinate S-adenosyl-L-methionine.

It belongs to the class I-like SAM-binding methyltransferase superfamily. rRNA adenine N(6)-methyltransferase family. RsmA subfamily.

The protein resides in the cytoplasm. It carries out the reaction adenosine(1518)/adenosine(1519) in 16S rRNA + 4 S-adenosyl-L-methionine = N(6)-dimethyladenosine(1518)/N(6)-dimethyladenosine(1519) in 16S rRNA + 4 S-adenosyl-L-homocysteine + 4 H(+). Its function is as follows. Specifically dimethylates two adjacent adenosines (A1518 and A1519) in the loop of a conserved hairpin near the 3'-end of 16S rRNA in the 30S particle. May play a critical role in biogenesis of 30S subunits. This chain is Ribosomal RNA small subunit methyltransferase A, found in Rickettsia conorii (strain ATCC VR-613 / Malish 7).